Consider the following 797-residue polypeptide: Calcium-transporting ATPase CtpE (797 aa).

A run of 3 helical transmembrane segments spans residues 55–75 (LLLI…LLII), 215–235 (ILQF…YTQL), and 254–274 (VPMV…VGVV). Residue D301 is the 4-aspartylphosphate intermediate of the active site. Mg(2+) is bound by residues D301, T303, and D536. The next 6 helical transmembrane spans lie at 601 to 621 (TVYS…AIPL), 633 to 653 (IHVT…LSLA), 667 to 687 (VMTS…VTYL), 703 to 723 (ASTA…AVIA), 729 to 749 (WRLA…SLPL), and 764 to 784 (TSIA…MWWI).

It belongs to the cation transport ATPase (P-type) (TC 3.A.3) family.

The protein resides in the cell membrane. It catalyses the reaction Ca(2+)(in) + ATP + H2O = Ca(2+)(out) + ADP + phosphate + H(+). In terms of biological role, P-type ATPase involved in specific uptake of calcium. The polypeptide is Calcium-transporting ATPase CtpE (ctpE) (Mycobacterium tuberculosis (strain CDC 1551 / Oshkosh)).